Here is a 429-residue protein sequence, read N- to C-terminus: UDP-N-acetylglucosamine 1-carboxyvinyltransferase (429 aa).

A phosphoenolpyruvate-binding site is contributed by Lys-22–Asn-23. Residue Arg-102 participates in UDP-N-acetyl-alpha-D-glucosamine binding. Cys-126 serves as the catalytic Proton donor. A 2-(S-cysteinyl)pyruvic acid O-phosphothioketal modification is found at Cys-126. Residues Arg-131–Leu-135, Asp-316, and Ile-338 contribute to the UDP-N-acetyl-alpha-D-glucosamine site.

The protein belongs to the EPSP synthase family. MurA subfamily.

It is found in the cytoplasm. The catalysed reaction is phosphoenolpyruvate + UDP-N-acetyl-alpha-D-glucosamine = UDP-N-acetyl-3-O-(1-carboxyvinyl)-alpha-D-glucosamine + phosphate. The protein operates within cell wall biogenesis; peptidoglycan biosynthesis. Cell wall formation. Adds enolpyruvyl to UDP-N-acetylglucosamine. The sequence is that of UDP-N-acetylglucosamine 1-carboxyvinyltransferase from Methylorubrum populi (strain ATCC BAA-705 / NCIMB 13946 / BJ001) (Methylobacterium populi).